The chain runs to 122 residues: Large ribosomal subunit protein uL14 (122 aa).

This sequence belongs to the universal ribosomal protein uL14 family. Part of the 50S ribosomal subunit. Forms a cluster with proteins L3 and L19. In the 70S ribosome, L14 and L19 interact and together make contacts with the 16S rRNA in bridges B5 and B8.

Functionally, binds to 23S rRNA. Forms part of two intersubunit bridges in the 70S ribosome. The protein is Large ribosomal subunit protein uL14 of Listeria monocytogenes serotype 4b (strain CLIP80459).